The sequence spans 560 residues: 5'-nucleotidase (560 aa).

An N-terminal signal peptide occupies residues 1-21; that stretch reads MNQRLIIKTALSAAILASLAG. C22 carries N-palmitoyl cysteine lipidation. C22 is lipidated: S-diacylglycerol cysteine. A divalent metal cation-binding residues include D45, H47, D88, N120, H221, H256, and Q258. Residues F432 and 501–507 each bind substrate; that span reads YNASGGD.

It belongs to the 5'-nucleotidase family. The cofactor is chloride. It depends on Mg(2+) as a cofactor.

The protein resides in the cell outer membrane. It catalyses the reaction a ribonucleoside 5'-phosphate + H2O = a ribonucleoside + phosphate. Degradation of extracellular 5'-nucleotides for nutritional needs. This chain is 5'-nucleotidase (nutA), found in Vibrio parahaemolyticus serotype O3:K6 (strain RIMD 2210633).